A 345-amino-acid polypeptide reads, in one-letter code: Diacylglycerol O-acyltransferase 1 (345 aa).

The Cytoplasmic portion of the chain corresponds to methionine 1–threonine 49. A helical membrane pass occupies residues valine 50 to tyrosine 70. Residues aspartate 71–asparagine 113 lie on the Lumenal side of the membrane. The chain crosses the membrane as a helical span at residues tyrosine 114 to serine 134. Over glutamate 135–lysine 141 the chain is Cytoplasmic. Residues leucine 142 to tyrosine 162 form a helical membrane-spanning segment. The Lumenal segment spans residues arginine 163–arginine 216. The helical transmembrane segment at phenylalanine 217–glycine 237 threads the bilayer. Residues glutamate 238 to alanine 345 lie on the Cytoplasmic side of the membrane.

It belongs to the diacylglycerol acyltransferase family.

Its subcellular location is the lipid droplet. The protein resides in the endoplasmic reticulum membrane. It carries out the reaction an acyl-CoA + a 1,2-diacyl-sn-glycerol = a triacyl-sn-glycerol + CoA. It catalyses the reaction a 2-acylglycerol + an acyl-CoA = a 1,2-diacyl-sn-glycerol + CoA. The protein operates within glycerolipid metabolism; triacylglycerol biosynthesis. Functionally, catalyzes the terminal and only committed step in triacylglycerol (TAG) synthesis by using diacylglycerol (DAG) and fatty acyl-CoA as substrates. Required for storage lipid synthesis. Major DAG esterifying enzyme in stationary phase when TAG production is particularly active. Involved in lipid particle synthesis from the endoplasmic reticulum, promoting localized TAG production at discrete ER subdomains. The sequence is that of Diacylglycerol O-acyltransferase 1 (dga1) from Schizosaccharomyces pombe (strain 972 / ATCC 24843) (Fission yeast).